Consider the following 120-residue polypeptide: UPF0344 protein LMOf2365_2298 (120 aa).

A run of 4 helical transmembrane segments spans residues 3-23 (GYIH…ALLI), 33-53 (MLQM…IMMV), 62-82 (ILAI…EMLL), and 92-112 (GMFL…GFYL).

It belongs to the UPF0344 family.

The protein localises to the cell membrane. The protein is UPF0344 protein LMOf2365_2298 of Listeria monocytogenes serotype 4b (strain F2365).